Here is a 398-residue protein sequence, read N- to C-terminus: Energy-coupling factor transporter ATP-binding protein EcfA2 (398 aa).

Positions 5-240 constitute an ABC transporter domain; that stretch reads IELKDLEYAY…KELVRRARLK (236 aa). 38–45 contributes to the ATP binding site; that stretch reads GSNGAGKS.

This sequence belongs to the ABC transporter superfamily. Energy-coupling factor EcfA family. As to quaternary structure, forms a stable energy-coupling factor (ECF) transporter complex composed of 2 membrane-embedded substrate-binding proteins (S component), 2 ATP-binding proteins (A component) and 2 transmembrane proteins (T component).

The protein localises to the cell membrane. Functionally, ATP-binding (A) component of a common energy-coupling factor (ECF) ABC-transporter complex. Unlike classic ABC transporters this ECF transporter provides the energy necessary to transport a number of different substrates. In Methanospirillum hungatei JF-1 (strain ATCC 27890 / DSM 864 / NBRC 100397 / JF-1), this protein is Energy-coupling factor transporter ATP-binding protein EcfA2.